Reading from the N-terminus, the 645-residue chain is Sentrin-specific protease 1 (645 aa).

The tract at residues 1 to 200 (MDDIADRMRM…REIYRQLLQM (200 aa)) is interaction with CCAR2. A phosphoserine mark is found at S57, S117, and S157. Residues 92–117 (QSANGQWRNSTPSSSSSLQKSRNSRS) form a disordered region. Positions 99 to 117 (RNSTPSSSSSLQKSRNSRS) are enriched in low complexity. The Nuclear localization signal signature appears at 171–177 (PKKTQRR). Positions 285-313 (KDSGTLHHPHHHHSVPHQPDNLAASNTQS) are disordered. 2 protease regions span residues 451 to 614 (LTIT…YADC) and 451 to 615 (LTIT…ADCI). Catalysis depends on residues H534 and D551. A Nuclear localization signal motif is present at residues 575-578 (KKRK). C604 functions as the Nucleophile in the catalytic mechanism. The Nuclear localization signal motif lies at 629 to 635 (PYFRKRM). Residues 636 to 645 (VWEILHRKLL) carry the Nuclear export signal motif.

This sequence belongs to the peptidase C48 family. Interacts with RBM33; promoting ALKBH5 desumoylation and subsequent activation.

It localises to the nucleus. Its subcellular location is the cytoplasm. In terms of biological role, protease that catalyzes two essential functions in the SUMO pathway. The first is the hydrolysis of an alpha-linked peptide bond at the C-terminal end of the small ubiquitin-like modifier (SUMO) propeptides, SUMO1, SUMO2 and SUMO3 leading to the mature form of the proteins. The second is the deconjugation of SUMO1, SUMO2 and SUMO3 from targeted proteins, by cleaving an epsilon-linked peptide bond between the C-terminal glycine of the mature SUMO and the lysine epsilon-amino group of the target protein. Deconjugates SUMO1 from HIPK2. Deconjugates SUMO1 from HDAC1 and BHLHE40/DEC1, which decreases its transcriptional repression activity. Deconjugates SUMO1 from CLOCK, which decreases its transcriptional activation activity. Deconjugates SUMO2 from MTA1. Inhibits N(6)-methyladenosine (m6A) RNA methylation by mediating SUMO1 deconjugation from METTL3 and ALKBH5: METTL3 inhibits the m6A RNA methyltransferase activity, while ALKBH5 desumoylation promotes m6A demethylation. Desumoylates CCAR2 which decreases its interaction with SIRT1. Deconjugates SUMO1 from GPS2. The sequence is that of Sentrin-specific protease 1 (SENP1) from Pongo abelii (Sumatran orangutan).